The primary structure comprises 334 residues: Probable peptidoglycan endopeptidase LytE (334 aa).

Positions 1 to 25 (MKKQIITATTAVVLGSTLFAGAASA) are cleaved as a signal peptide. LysM domains lie at 26-69 (QSIK…TLSI), 86-129 (STYK…VLKL), and 149-192 (STYK…VLKV). 3 disordered regions span residues 70–89 (NGKS…STYK), 131–153 (GSTS…TYKV), and 195–215 (TSTS…KTSS). 2 stretches are compositionally biased toward low complexity: residues 72 to 87 (KSTS…SSST) and 132 to 153 (STSS…TYKV). The 118-residue stretch at 217–334 (SLNVSKLVSD…KPRYLGAKRF (118 aa)) folds into the NlpC/P60 domain. Cysteine 247 acts as the Nucleophile in catalysis. Catalysis depends on histidine 296, which acts as the Proton acceptor. Residue histidine 308 is part of the active site.

This sequence belongs to the peptidase C40 family.

Its subcellular location is the secreted. The protein resides in the cell wall. In terms of biological role, cell wall hydrolase that cleaves gamma-D-glutamate-meso-diaminopimelate bonds in peptidoglycan. Seems to play a role in cell separation during vegetative growth. This Bacillus subtilis (strain 168) protein is Probable peptidoglycan endopeptidase LytE (lytE).